A 781-amino-acid chain; its full sequence is Dual specificity protein kinase zakA (781 aa).

Protein kinase domains follow at residues 9 to 317 (WEEI…HKLI) and 379 to 654 (DKDD…EIGL). Residues 15-23 (IGEGQYGRV) and K44 each bind ATP. The active-site Proton acceptor is the D132. Residues 168–209 (ETTNNNNNPNNNNNNNNNNNNNNNNNNNNNNNNNNINNINNN) form a disordered region. The span at 171 to 209 (NNNNNPNNNNNNNNNNNNNNNNNNNNNNNNNNINNINNN) shows a compositional bias: low complexity. ATP-binding positions include 385–393 (GGAGNFGDV) and K406. D507 (proton acceptor) is an active-site residue.

It in the N-terminal section; belongs to the protein kinase superfamily. Ser/Thr protein kinase family. The protein in the C-terminal section; belongs to the protein kinase superfamily. TKL Tyr protein kinase family. N-terminal serine/threonine domain is capable of autophosphorylation, in vitro, but to a lower extent than the tyrosine kinase domain. May function as a negative regulator of the tyrosine kinase domain. In terms of processing, C-terminal tyrosine kinase domain is capable of autophosphorylation, in vitro. In terms of tissue distribution, zakA and zak2 are coexpressed in prestalk cell population, zakA is enriched in pstB populations and zak1 in pstA populations. ZakA and zak2 are coexpressed in prespore cells, zakA expression levels are 10 fold higher than zak2.

It carries out the reaction L-seryl-[protein] + ATP = O-phospho-L-seryl-[protein] + ADP + H(+). The enzyme catalyses L-threonyl-[protein] + ATP = O-phospho-L-threonyl-[protein] + ADP + H(+). It catalyses the reaction L-tyrosyl-[protein] + ATP = O-phospho-L-tyrosyl-[protein] + ADP + H(+). Positive regulator of gsk3/gskA activity required for cell pattern formation and a downstream effector of carC. The kinases, gsk3/gskA, zakA and zak2, form part of a signaling pathway that responds to extracellular cyclic AMP. The pathway has a role in transcriptional regulation; required to direct prespore/spore fates during development. ZakA negatively regulates prestalk differentiation by regulating expression of ecmB. Phosphorylates Y-214 of gsk3/gskA, in vitro. The chain is Dual specificity protein kinase zakA (zakA) from Dictyostelium discoideum (Social amoeba).